Reading from the N-terminus, the 485-residue chain is Cytochrome P450 monooxygenase tndB (485 aa).

The chain crosses the membrane as a helical span at residues 20 to 40 (VYGISAVIAVGLAIYSASLAI). Residue Cys481 coordinates heme.

Belongs to the cytochrome P450 family. Heme is required as a cofactor.

It localises to the membrane. The protein operates within secondary metabolite biosynthesis; terpenoid biosynthesis. In terms of biological role, cytochrome P450 monooxygenase; part of the gene cluster that mediates the biosynthesis of talaronoid C, a fusicoccane diterpenoid with an unprecedented tricyclic 5/8/6 ring system. The first step in the pathway is performed by the fusicoccadiene synthase tndC that possesses both prenyl transferase and terpene cyclase activity, converting isopentenyl diphosphate and dimethylallyl diphosphate into geranylgeranyl diphosphate (GGDP) and further converting GGDP into talarodiene, a precursor for talaronoid C. The remaining enzymes from the cluster include the cytochrome P450 monooxygenase tndB, the aldehyde reductase tndE and the alcohol dehydrogenase tndF that are involved in the conversion of talarodiene into talaronoid C. In Aspergillus flavipes, this protein is Cytochrome P450 monooxygenase tndB.